The chain runs to 547 residues: Chaperonin GroEL 1 (547 aa).

Residues 30–33 (TLGP), lysine 51, 87–91 (DGTTT), glycine 415, 479–481 (NAA), and aspartate 495 contribute to the ATP site. Residues 525–547 (PKKKGAPAGGGMGGMGGMDEMDY) form a disordered region. Positions 531-541 (PAGGGMGGMGG) are enriched in gly residues.

This sequence belongs to the chaperonin (HSP60) family. In terms of assembly, forms a cylinder of 14 subunits composed of two heptameric rings stacked back-to-back. Interacts with the co-chaperonin GroES.

The protein resides in the cytoplasm. It carries out the reaction ATP + H2O + a folded polypeptide = ADP + phosphate + an unfolded polypeptide.. Its function is as follows. Together with its co-chaperonin GroES, plays an essential role in assisting protein folding. The GroEL-GroES system forms a nano-cage that allows encapsulation of the non-native substrate proteins and provides a physical environment optimized to promote and accelerate protein folding. In Anaeromyxobacter sp. (strain Fw109-5), this protein is Chaperonin GroEL 1.